The chain runs to 390 residues: Putative 2-isopropylmalate synthase (390 aa).

Residues 5–267 enclose the Pyruvate carboxyltransferase domain; the sequence is IIIFDTTLRD…KTNIKYQEIY (263 aa). Mn(2+) contacts are provided by D14, H202, H204, and N238.

The protein belongs to the alpha-IPM synthase/homocitrate synthase family. LeuA type 1 subfamily. As to quaternary structure, homodimer. The cofactor is Mn(2+).

Its subcellular location is the cytoplasm. The catalysed reaction is 3-methyl-2-oxobutanoate + acetyl-CoA + H2O = (2S)-2-isopropylmalate + CoA + H(+). It functions in the pathway amino-acid biosynthesis; L-leucine biosynthesis; L-leucine from 3-methyl-2-oxobutanoate: step 1/4. Its function is as follows. Catalyzes the condensation of the acetyl group of acetyl-CoA with 3-methyl-2-oxobutanoate (2-ketoisovalerate) to form 3-carboxy-3-hydroxy-4-methylpentanoate (2-isopropylmalate). The protein is Putative 2-isopropylmalate synthase of Buchnera aphidicola subsp. Baizongia pistaciae (strain Bp).